We begin with the raw amino-acid sequence, 176 residues long: Cytochrome b (176 aa).

3 helical membrane-spanning segments follow: residues 33 to 53, 77 to 98, and 113 to 133; these read FGSL…FLAM, WLLR…YLHI, and WNVG…GYVL. Heme b is bound by residues H83 and H97.

It belongs to the cytochrome b family. The cytochrome bc1 complex contains 11 subunits: 3 respiratory subunits (MT-CYB, CYC1 and UQCRFS1), 2 core proteins (UQCRC1 and UQCRC2) and 6 low-molecular weight proteins (UQCRH/QCR6, UQCRB/QCR7, UQCRQ/QCR8, UQCR10/QCR9, UQCR11/QCR10 and a cleavage product of UQCRFS1). This cytochrome bc1 complex then forms a dimer. It depends on heme b as a cofactor.

It localises to the mitochondrion inner membrane. Functionally, component of the ubiquinol-cytochrome c reductase complex (complex III or cytochrome b-c1 complex) that is part of the mitochondrial respiratory chain. The b-c1 complex mediates electron transfer from ubiquinol to cytochrome c. Contributes to the generation of a proton gradient across the mitochondrial membrane that is then used for ATP synthesis. In Nyctinomops aurispinosus (Peale's free-tailed bat), this protein is Cytochrome b (MT-CYB).